The sequence spans 56 residues: Protein SspF (56 aa).

The protein belongs to the alpha/beta-type SASP family.

May play some important role in either sporulation or the dormant spore. This Priestia megaterium (strain ATCC 12872 / QMB1551) (Bacillus megaterium) protein is Protein SspF (sspF).